Consider the following 141-residue polypeptide: Nucleoside diphosphate kinase (141 aa).

6 residues coordinate ATP: Lys-11, Phe-59, Arg-87, Thr-93, Arg-104, and Asn-114. His-117 functions as the Pros-phosphohistidine intermediate in the catalytic mechanism.

This sequence belongs to the NDK family. In terms of assembly, homotetramer. Requires Mg(2+) as cofactor.

It is found in the cytoplasm. The catalysed reaction is a 2'-deoxyribonucleoside 5'-diphosphate + ATP = a 2'-deoxyribonucleoside 5'-triphosphate + ADP. It carries out the reaction a ribonucleoside 5'-diphosphate + ATP = a ribonucleoside 5'-triphosphate + ADP. In terms of biological role, major role in the synthesis of nucleoside triphosphates other than ATP. The ATP gamma phosphate is transferred to the NDP beta phosphate via a ping-pong mechanism, using a phosphorylated active-site intermediate. The chain is Nucleoside diphosphate kinase from Azoarcus sp. (strain BH72).